The sequence spans 142 residues: Glia maturation factor gamma (142 aa).

N-acetylserine is present on S2. An ADF-H domain is found at S4–A139.

It belongs to the actin-binding proteins ADF family. GMF subfamily.

In Mus musculus (Mouse), this protein is Glia maturation factor gamma (Gmfg).